The following is a 78-amino-acid chain: Small ribosomal subunit protein bS16c (78 aa).

It belongs to the bacterial ribosomal protein bS16 family.

It localises to the plastid. Its subcellular location is the chloroplast. The chain is Small ribosomal subunit protein bS16c from Amborella trichopoda.